Here is a 381-residue protein sequence, read N- to C-terminus: 2-methylcitrate synthase 1 (381 aa).

A substrate-binding site is contributed by H192. H227 is a catalytic residue. 260-264 serves as a coordination point for CoA; the sequence is RIMGF. Residue H266 is part of the active site. R275 provides a ligand contact to substrate. D317 is a catalytic residue. Substrate contacts are provided by R342 and R361.

Belongs to the citrate synthase family. As to quaternary structure, homodimer.

The enzyme catalyses propanoyl-CoA + oxaloacetate + H2O = (2S,3S)-2-methylcitrate + CoA + H(+). The catalysed reaction is oxaloacetate + acetyl-CoA + H2O = citrate + CoA + H(+). It functions in the pathway carbohydrate metabolism; tricarboxylic acid cycle. Its function is as follows. Catalyzes the Claisen condensation of propionyl-CoA and oxaloacetate (OAA) to yield 2-methylcitrate (2-MC) and CoA. Also catalyzes the condensation of oxaloacetate with propionyl-CoA but with a lower specificity. The chain is 2-methylcitrate synthase 1 (prpC1) from Corynebacterium glutamicum (strain ATCC 13032 / DSM 20300 / JCM 1318 / BCRC 11384 / CCUG 27702 / LMG 3730 / NBRC 12168 / NCIMB 10025 / NRRL B-2784 / 534).